Here is a 334-residue protein sequence, read N- to C-terminus: Catabolite repressor/activator (334 aa).

The HTH lacI-type domain maps to 1-58 (MKLDEIARLAGVSRTTASYVINGKAKQYRVSDKTVEKVMAVVREHNYHPNAVAAGLRA). The H-T-H motif DNA-binding region spans 3 to 22 (LDEIARLAGVSRTTASYVIN).

In terms of assembly, homotetramer.

In terms of biological role, global transcriptional regulator, which plays an important role in the regulation of carbon metabolism. The chain is Catabolite repressor/activator (cra) from Escherichia coli O157:H7.